An 89-amino-acid chain; its full sequence is Dynein light chain 2, cytoplasmic (89 aa).

This sequence belongs to the dynein light chain family. As to quaternary structure, homodimer. The cytoplasmic dynein 1 complex consists of two catalytic heavy chains (HCs) and a number of non-catalytic subunits which present intermediate chains (ICs), light intermediate chains (LICs) and light chains (LCs); the composition seems to vary in respect to the IC, LIC and LC composition. The heavy chain homodimer serves as a scaffold for the probable homodimeric assembly of the respective non-catalytic subunits. Dynein ICs and LICs bind directly to the HC dimer and the LCs assemble on the IC dimer. Interacts with DYNC1I1. Interacts with BMF. Component of the myosin V motor complex. Interacts with BCAS1. Interacts with Basson/BSN. Interacts with AMBRA1 (via TQT motifs); tethering AMBRA1 to the cytoskeleton. Interacts with IQUB.

The protein resides in the cytoplasm. It is found in the cytoskeleton. Functionally, acts as one of several non-catalytic accessory components of the cytoplasmic dynein 1 complex that are thought to be involved in linking dynein to cargos and to adapter proteins that regulate dynein function. Cytoplasmic dynein 1 acts as a motor for the intracellular retrograde motility of vesicles and organelles along microtubules. May play a role in changing or maintaining the spatial distribution of cytoskeletal structures. This is Dynein light chain 2, cytoplasmic (DYNLL2) from Homo sapiens (Human).